Reading from the N-terminus, the 373-residue chain is 3 beta-hydroxysteroid dehydrogenase/Delta 5--&gt;4-isomerase type 2 (373 aa).

Catalysis depends on Tyr-155, which acts as the Proton acceptor. Position 159 (Lys-159) interacts with NAD(+). Residues 288-308 (LPLLYWLAFLLETVSFLLRPF) form a helical membrane-spanning segment.

The protein belongs to the 3-beta-HSD family. Adrenal glands, testes and ovaries.

The protein localises to the endoplasmic reticulum membrane. Its subcellular location is the mitochondrion membrane. It catalyses the reaction a 3beta-hydroxy-Delta(5)-steroid + NAD(+) = a 3-oxo-Delta(5)-steroid + NADH + H(+). The catalysed reaction is a 3-oxo-Delta(5)-steroid = a 3-oxo-Delta(4)-steroid. It functions in the pathway lipid metabolism; steroid biosynthesis. Functionally, 3-beta-HSD is a bifunctional enzyme, that catalyzes the oxidative conversion of Delta(5)-ene-3-beta-hydroxy steroid, and the oxidative conversion of ketosteroids. The 3-beta-HSD enzymatic system plays a crucial role in the biosynthesis of all classes of hormonal steroids. This Rattus norvegicus (Rat) protein is 3 beta-hydroxysteroid dehydrogenase/Delta 5--&gt;4-isomerase type 2 (Hsd3b).